Here is an 85-residue protein sequence, read N- to C-terminus: Toxin BmKaIT1 (85 aa).

The signal sequence occupies residues 1-19; sequence MNYLVMISFAFLLMTGVES. Positions 21–83 constitute an LCN-type CS-alpha/beta domain; sequence RDAYIAQNYN…VPIRVPGKCH (63 aa). 4 disulfides stabilise this stretch: Cys-31-Cys-82, Cys-35-Cys-55, Cys-41-Cys-65, and Cys-45-Cys-67. Positions 84-85 are cleaved as a propeptide — removed by a carboxypeptidase; the sequence is RR.

Belongs to the long (4 C-C) scorpion toxin superfamily. Sodium channel inhibitor family. Alpha subfamily. Expressed by the venom gland.

The protein resides in the secreted. Functionally, alpha toxins bind voltage-independently at site-3 of sodium channels (Nav) and inhibit the inactivation of the activated channels, thereby blocking neuronal transmission. Shows a high toxicity toward insects and moderate toxicity against mammals. The protein is Toxin BmKaIT1 of Olivierus martensii (Manchurian scorpion).